The sequence spans 79 residues: Sulfur carrier protein TusA (79 aa).

The active-site Cysteine persulfide intermediate is Cys-17.

This sequence belongs to the sulfur carrier protein TusA family.

It localises to the cytoplasm. Sulfur carrier protein which probably makes part of a sulfur-relay system. The sequence is that of Sulfur carrier protein TusA from Haemophilus influenzae (strain ATCC 51907 / DSM 11121 / KW20 / Rd).